The following is a 276-amino-acid chain: 3' cyclic ADP-D-ribose synthase HopAM1 (276 aa).

The segment covering 20 to 38 (VEASQVKSAGTSSTTNIDS) has biased composition (polar residues). A disordered region spans residues 20-39 (VEASQVKSAGTSSTTNIDSK). Positions 165 to 214 (KNGIAHAKKMAFFITPEWLGSDFCKQEFQWLSETKNKDIKSAFVIFKDVD) are TIR domain. Q190 is an active-site residue.

In terms of assembly, homodimer.

It localises to the host cytoplasm. The protein localises to the host cytosol. The catalysed reaction is NAD(+) = 3'cADPR + nicotinamide + H(+). In terms of biological role, NAD(+) hydrolase (NADase) that cleaves NAD(+) into nicotinamide and 3' cyclic ADP-D-ribose (3'cADPR, v2-cADPR). Upon infiltration of A.thaliana with this bacteria an effector-triggered immunity-like phenotype (ETI-like, cell death with severe chlorosis) is seen, 3'cADPR levels rise while NAD(+) levels remain constant. Plant immune responses are suppressed. Triggers hypersensitive response-like cell death in Nicotiana tabacum cv. Xanthi and N.benthamiana when transiently expressed, depletes NAD(+) in N.benthamiana. Causes cell death upon induction in yeast due to NAD(+) depletion and/or 3'cADPR itself. Transgenic A.thaliana expressing HopAM1 suppresses its plant immune system upon challenge; the plants produce 3'cADPR without significantly depleting NAD(+). The polypeptide is 3' cyclic ADP-D-ribose synthase HopAM1 (Pseudomonas syringae pv. tomato (strain ATCC BAA-871 / DC3000)).